The primary structure comprises 619 residues: tRNA uridine 5-carboxymethylaminomethyl modification enzyme MnmG (619 aa).

FAD-binding positions include 14–19, Val126, and Ser181; that span reads GAGHAG. An NAD(+)-binding site is contributed by 273-287; the sequence is GPRYCPSIEDKIMRF. Residue Gln370 coordinates FAD.

The protein belongs to the MnmG family. In terms of assembly, homodimer. Heterotetramer of two MnmE and two MnmG subunits. Requires FAD as cofactor.

The protein localises to the cytoplasm. NAD-binding protein involved in the addition of a carboxymethylaminomethyl (cmnm) group at the wobble position (U34) of certain tRNAs, forming tRNA-cmnm(5)s(2)U34. This chain is tRNA uridine 5-carboxymethylaminomethyl modification enzyme MnmG, found in Syntrophotalea carbinolica (strain DSM 2380 / NBRC 103641 / GraBd1) (Pelobacter carbinolicus).